Here is a 515-residue protein sequence, read N- to C-terminus: 2-isopropylmalate synthase (515 aa).

Residues 4 to 266 form the Pyruvate carboxyltransferase domain; sequence INIFDTTLRD…ETRLNLQEIK (263 aa). Mn(2+) contacts are provided by aspartate 13, histidine 201, histidine 203, and asparagine 237. The segment at 391 to 515 is regulatory domain; the sequence is QLSSLQVQYG…RAENQKVAMQ (125 aa).

Belongs to the alpha-IPM synthase/homocitrate synthase family. LeuA type 1 subfamily. In terms of assembly, homodimer. Mn(2+) serves as cofactor.

The protein resides in the cytoplasm. The catalysed reaction is 3-methyl-2-oxobutanoate + acetyl-CoA + H2O = (2S)-2-isopropylmalate + CoA + H(+). It participates in amino-acid biosynthesis; L-leucine biosynthesis; L-leucine from 3-methyl-2-oxobutanoate: step 1/4. Functionally, catalyzes the condensation of the acetyl group of acetyl-CoA with 3-methyl-2-oxobutanoate (2-ketoisovalerate) to form 3-carboxy-3-hydroxy-4-methylpentanoate (2-isopropylmalate). The sequence is that of 2-isopropylmalate synthase from Geobacillus sp. (strain WCH70).